Consider the following 745-residue polypeptide: Phosphate transporter PHO1 homolog 4 (745 aa).

Residues 1–290 (MRFGKEFVSQ…KRNAAKLYME (290 aa)) enclose the SPX domain. Residues 1-342 (MRFGKEFVSQ…KINKERHLIT (342 aa)) are Cytoplasmic-facing. A helical membrane pass occupies residues 343–363 (FSTGFFFGCGISLIVALGLII). Topologically, residues 364 to 383 (HARNIMGTPGQRTYMETMFP) are extracellular. A helical transmembrane segment spans residues 384 to 404 (LYRFFGFVVLHMDVYAANIYF). The Cytoplasmic portion of the chain corresponds to 405–427 (WRRYRVNYSFIFGFKQGTELGYR). Residues 428 to 448 (HVLLLSFGLGTLSLCAVLLNL) form a helical membrane-spanning segment. Topologically, residues 449–464 (DMEMDAQTKDYRLVTE) are extracellular. The helical transmembrane segment at 465–485 (LIPLFLLVLVIIIVLCPFNIL) threads the bilayer. Residues 486-615 (YRSSRFFFLS…YTLNRGSNWN (130 aa)) are Cytoplasmic-facing. The region spanning 550 to 744 (TSNIGFRTFY…NYEEDGDHHN (195 aa)) is the EXS domain. The helical transmembrane segment at 616-636 (ITAWVFSGVATFYGTYWDIVL) threads the bilayer. Over 637-660 (DWGLLQRGCKNSFLRDKLLVPHKT) the chain is Extracellular. Residues 661 to 681 (VYYAAMVLNVLLRLVWLQTVL) traverse the membrane as a helical segment. Topologically, residues 682-745 (DLKFSFLHRE…YEEDGDHHNN (64 aa)) are cytoplasmic.

The protein belongs to the SYG1 (TC 2.A.94) family. In terms of tissue distribution, expressed in root epidermis and cortex, leaf hydathodes, pollen grains and stigma apex.

It localises to the cell membrane. May transport inorganic phosphate (Pi). The protein is Phosphate transporter PHO1 homolog 4 (PHO1-H4) of Arabidopsis thaliana (Mouse-ear cress).